We begin with the raw amino-acid sequence, 476 residues long: Bifunctional protein HldE (476 aa).

Positions methionine 1 to serine 319 are ribokinase. Asparagine 195 to glutamate 198 serves as a coordination point for ATP. The active site involves aspartate 264. The tract at residues methionine 345 to glutamine 476 is cytidylyltransferase.

In the N-terminal section; belongs to the carbohydrate kinase PfkB family. It in the C-terminal section; belongs to the cytidylyltransferase family. In terms of assembly, homodimer.

The enzyme catalyses D-glycero-beta-D-manno-heptose 7-phosphate + ATP = D-glycero-beta-D-manno-heptose 1,7-bisphosphate + ADP + H(+). It catalyses the reaction D-glycero-beta-D-manno-heptose 1-phosphate + ATP + H(+) = ADP-D-glycero-beta-D-manno-heptose + diphosphate. The protein operates within nucleotide-sugar biosynthesis; ADP-L-glycero-beta-D-manno-heptose biosynthesis; ADP-L-glycero-beta-D-manno-heptose from D-glycero-beta-D-manno-heptose 7-phosphate: step 1/4. Its pathway is nucleotide-sugar biosynthesis; ADP-L-glycero-beta-D-manno-heptose biosynthesis; ADP-L-glycero-beta-D-manno-heptose from D-glycero-beta-D-manno-heptose 7-phosphate: step 3/4. Catalyzes the phosphorylation of D-glycero-D-manno-heptose 7-phosphate at the C-1 position to selectively form D-glycero-beta-D-manno-heptose-1,7-bisphosphate. Its function is as follows. Catalyzes the ADP transfer from ATP to D-glycero-beta-D-manno-heptose 1-phosphate, yielding ADP-D-glycero-beta-D-manno-heptose. This is Bifunctional protein HldE from Shewanella sp. (strain MR-4).